A 121-amino-acid polypeptide reads, in one-letter code: Large ribosomal subunit protein bL19 (121 aa).

This sequence belongs to the bacterial ribosomal protein bL19 family.

Its function is as follows. This protein is located at the 30S-50S ribosomal subunit interface and may play a role in the structure and function of the aminoacyl-tRNA binding site. This chain is Large ribosomal subunit protein bL19, found in Bifidobacterium adolescentis (strain ATCC 15703 / DSM 20083 / NCTC 11814 / E194a).